The primary structure comprises 81 residues: Acyl carrier protein (81 aa).

Positions 2-80 (ASNEEILAGL…DAVSFIANAQ (79 aa)) constitute a Carrier domain. Ser40 bears the O-(pantetheine 4'-phosphoryl)serine mark.

It belongs to the acyl carrier protein (ACP) family. Post-translationally, 4'-phosphopantetheine is transferred from CoA to a specific serine of apo-ACP by AcpS. This modification is essential for activity because fatty acids are bound in thioester linkage to the sulfhydryl of the prosthetic group.

It localises to the cytoplasm. It functions in the pathway lipid metabolism; fatty acid biosynthesis. Its function is as follows. Carrier of the growing fatty acid chain in fatty acid biosynthesis. This is Acyl carrier protein from Paenarthrobacter aurescens (strain TC1).